A 358-amino-acid polypeptide reads, in one-letter code: Carbamoyl phosphate synthase small chain (358 aa).

The tract at residues 1-172 (MKAALALEDG…EAKRFESDGD (172 aa)) is CPSase. L-glutamine is bound by residues Ser-45, Gly-222, and Gly-224. The region spanning 174–358 (EVVLVDCGVK…RYVDMLREYR (185 aa)) is the Glutamine amidotransferase type-1 domain. Cys-249 serves as the catalytic Nucleophile. Residues Leu-250, Gln-253, Asn-291, and Phe-294 each coordinate L-glutamine. Residues His-333 and Glu-335 contribute to the active site.

The protein belongs to the CarA family. Composed of two chains; the small (or glutamine) chain promotes the hydrolysis of glutamine to ammonia, which is used by the large (or ammonia) chain to synthesize carbamoyl phosphate. Tetramer of heterodimers (alpha,beta)4.

The catalysed reaction is hydrogencarbonate + L-glutamine + 2 ATP + H2O = carbamoyl phosphate + L-glutamate + 2 ADP + phosphate + 2 H(+). The enzyme catalyses L-glutamine + H2O = L-glutamate + NH4(+). It functions in the pathway amino-acid biosynthesis; L-arginine biosynthesis; carbamoyl phosphate from bicarbonate: step 1/1. The protein operates within pyrimidine metabolism; UMP biosynthesis via de novo pathway; (S)-dihydroorotate from bicarbonate: step 1/3. Its function is as follows. Small subunit of the glutamine-dependent carbamoyl phosphate synthetase (CPSase). CPSase catalyzes the formation of carbamoyl phosphate from the ammonia moiety of glutamine, carbonate, and phosphate donated by ATP, constituting the first step of 2 biosynthetic pathways, one leading to arginine and/or urea and the other to pyrimidine nucleotides. The small subunit (glutamine amidotransferase) binds and cleaves glutamine to supply the large subunit with the substrate ammonia. This chain is Carbamoyl phosphate synthase small chain, found in Archaeoglobus fulgidus (strain ATCC 49558 / DSM 4304 / JCM 9628 / NBRC 100126 / VC-16).